Here is a 91-residue protein sequence, read N- to C-terminus: UPF0147 protein APE_2336a (91 aa).

It belongs to the UPF0147 family.

The protein is UPF0147 protein APE_2336a of Aeropyrum pernix (strain ATCC 700893 / DSM 11879 / JCM 9820 / NBRC 100138 / K1).